A 470-amino-acid polypeptide reads, in one-letter code: 6-phospho-beta-galactosidase (470 aa).

The D-galactose 6-phosphate site is built by Gln19, His116, Asn159, Glu160, and Asn297. Residue Glu160 is the Proton donor of the active site. Residue Glu375 is the Nucleophile of the active site. Ser430, Trp431, Lys437, and Tyr439 together coordinate D-galactose 6-phosphate.

This sequence belongs to the glycosyl hydrolase 1 family.

The enzyme catalyses a 6-phospho-beta-D-galactoside + H2O = D-galactose 6-phosphate + an alcohol. The protein operates within carbohydrate metabolism; lactose degradation; D-galactose 6-phosphate and beta-D-glucose from lactose 6-phosphate: step 1/1. This Staphylococcus aureus (strain MRSA252) protein is 6-phospho-beta-galactosidase.